The chain runs to 82 residues: Myosin light chain alkali (82 aa).

In terms of domain architecture, EF-hand spans 7 to 42; it reads GCYEDFIECLKLYDKEENGTMLLAELQHALLALGEN.

Myosin is a hexamer of 2 heavy chains and 4 light chains.

In Drosophila teissieri (Fruit fly), this protein is Myosin light chain alkali (Mlc1).